A 178-amino-acid chain; its full sequence is Cytochrome b6-f complex iron-sulfur subunit (178 aa).

A helical membrane pass occupies residues 20-42; that stretch reads LLTFGSVTGVALGALYPVANYFI. The Rieske domain maps to 65–161; the sequence is ASGWLSSHPE…VSVENDNVFV (97 aa). [2Fe-2S] cluster-binding residues include cysteine 107, histidine 109, cysteine 125, and histidine 128. A disulfide bridge links cysteine 112 with cysteine 127.

This sequence belongs to the Rieske iron-sulfur protein family. As to quaternary structure, the 4 large subunits of the cytochrome b6-f complex are cytochrome b6, subunit IV (17 kDa polypeptide, PetD), cytochrome f and the Rieske protein, while the 4 small subunits are PetG, PetL, PetM and PetN. The complex functions as a dimer. The cofactor is [2Fe-2S] cluster.

The protein localises to the cellular thylakoid membrane. It catalyses the reaction 2 oxidized [plastocyanin] + a plastoquinol + 2 H(+)(in) = 2 reduced [plastocyanin] + a plastoquinone + 4 H(+)(out). Functionally, component of the cytochrome b6-f complex, which mediates electron transfer between photosystem II (PSII) and photosystem I (PSI), cyclic electron flow around PSI, and state transitions. The protein is Cytochrome b6-f complex iron-sulfur subunit of Synechococcus sp. (strain CC9605).